We begin with the raw amino-acid sequence, 296 residues long: tRNA dimethylallyltransferase (296 aa).

2–9 (GPTASGKT) serves as a coordination point for ATP. 4 to 9 (TASGKT) lines the substrate pocket. Interaction with substrate tRNA stretches follow at residues 27–30 (DSAL), 151–155 (QRLSR), and 232–237 (RCVGYR).

Belongs to the IPP transferase family. Monomer. Mg(2+) serves as cofactor.

The enzyme catalyses adenosine(37) in tRNA + dimethylallyl diphosphate = N(6)-dimethylallyladenosine(37) in tRNA + diphosphate. Its function is as follows. Catalyzes the transfer of a dimethylallyl group onto the adenine at position 37 in tRNAs that read codons beginning with uridine, leading to the formation of N6-(dimethylallyl)adenosine (i(6)A). This Shewanella baltica (strain OS155 / ATCC BAA-1091) protein is tRNA dimethylallyltransferase.